Reading from the N-terminus, the 158-residue chain is NADH-quinone oxidoreductase subunit B (158 aa).

4 residues coordinate [4Fe-4S] cluster: Cys-37, Cys-38, Cys-102, and Cys-132.

This sequence belongs to the complex I 20 kDa subunit family. In terms of assembly, NDH-1 is composed of 14 different subunits. Subunits NuoB, C, D, E, F, and G constitute the peripheral sector of the complex. [4Fe-4S] cluster serves as cofactor.

The protein localises to the cell inner membrane. It carries out the reaction a quinone + NADH + 5 H(+)(in) = a quinol + NAD(+) + 4 H(+)(out). In terms of biological role, NDH-1 shuttles electrons from NADH, via FMN and iron-sulfur (Fe-S) centers, to quinones in the respiratory chain. Couples the redox reaction to proton translocation (for every two electrons transferred, four hydrogen ions are translocated across the cytoplasmic membrane), and thus conserves the redox energy in a proton gradient. This is NADH-quinone oxidoreductase subunit B from Nitrosomonas europaea (strain ATCC 19718 / CIP 103999 / KCTC 2705 / NBRC 14298).